The sequence spans 31 residues: Cytochrome b6-f complex subunit 8 (31 aa).

The helical transmembrane segment at isoleucine 5–valine 25 threads the bilayer.

This sequence belongs to the PetN family. The 4 large subunits of the cytochrome b6-f complex are cytochrome b6, subunit IV (17 kDa polypeptide, PetD), cytochrome f and the Rieske protein, while the 4 small subunits are PetG, PetL, PetM and PetN. The complex functions as a dimer.

It is found in the plastid. The protein resides in the chloroplast thylakoid membrane. Component of the cytochrome b6-f complex, which mediates electron transfer between photosystem II (PSII) and photosystem I (PSI), cyclic electron flow around PSI, and state transitions. This Cicer arietinum (Chickpea) protein is Cytochrome b6-f complex subunit 8.